Reading from the N-terminus, the 146-residue chain is Hemoglobin subunit beta (146 aa).

Residues 2–146 form the Globin domain; sequence HWSAEEKQLI…VAHALARKYH (145 aa). The heme b site is built by histidine 63 and histidine 92.

This sequence belongs to the globin family. Heterotetramer of two alpha chains and two beta chains. Red blood cells.

In terms of biological role, involved in oxygen transport from the lung to the various peripheral tissues. The chain is Hemoglobin subunit beta (HBB) from Streptopelia orientalis (Eastern turtle dove).